We begin with the raw amino-acid sequence, 301 residues long: Acetyl-coenzyme A carboxylase carboxyl transferase subunit beta (301 aa).

The CoA carboxyltransferase N-terminal domain maps to 25–294 (LWIKCPETGE…SAANDVTRGA (270 aa)).

Belongs to the AccD/PCCB family. Acetyl-CoA carboxylase is a heterohexamer composed of biotin carboxyl carrier protein (AccB), biotin carboxylase (AccC) and two subunits each of ACCase subunit alpha (AccA) and ACCase subunit beta (AccD).

It localises to the cytoplasm. It carries out the reaction N(6)-carboxybiotinyl-L-lysyl-[protein] + acetyl-CoA = N(6)-biotinyl-L-lysyl-[protein] + malonyl-CoA. The protein operates within lipid metabolism; malonyl-CoA biosynthesis; malonyl-CoA from acetyl-CoA: step 1/1. In terms of biological role, component of the acetyl coenzyme A carboxylase (ACC) complex. Biotin carboxylase (BC) catalyzes the carboxylation of biotin on its carrier protein (BCCP) and then the CO(2) group is transferred by the transcarboxylase to acetyl-CoA to form malonyl-CoA. This Rhizobium etli (strain ATCC 51251 / DSM 11541 / JCM 21823 / NBRC 15573 / CFN 42) protein is Acetyl-coenzyme A carboxylase carboxyl transferase subunit beta.